The primary structure comprises 233 residues: Large ribosomal subunit protein uL1 (233 aa).

The protein belongs to the universal ribosomal protein uL1 family. As to quaternary structure, part of the 50S ribosomal subunit.

Functionally, binds directly to 23S rRNA. The L1 stalk is quite mobile in the ribosome, and is involved in E site tRNA release. Protein L1 is also a translational repressor protein, it controls the translation of the L11 operon by binding to its mRNA. This chain is Large ribosomal subunit protein uL1, found in Shewanella sp. (strain ANA-3).